The following is a 190-amino-acid chain: MGFLSSLSNLFGMGKKDVNIVVVGLDNSGKTTILNQLKTPETRSQQIVPTVGHVVTNFSTQNLSFHAFDMAGQMKYRSTWESYFHSSQGVIFVLDSSDRVRMELLKDELWLVLDHKDVASRGIPVVILANKMDIPGAMTCADITAALGLNLHRSGTWSIHSTCALTGDGLDKAMQQLSSEIQKYLETRKS.

Residue glycine 2 is the site of N-myristoyl glycine attachment. GTP contacts are provided by residues 24–31 (GLDNSGKT), threonine 50, 69–73 (DMAGQ), glycine 72, 130–133 (NKMD), and alanine 164. Mg(2+)-binding residues include threonine 31 and threonine 50.

Belongs to the small GTPase superfamily. Arf family.

The protein resides in the cytoplasm. This Caenorhabditis briggsae protein is ADP-ribosylation factor-like protein 6.